A 502-amino-acid polypeptide reads, in one-letter code: AMP phosphorylase (502 aa).

AMP is bound by residues glycine 168, 195–200 (SRAITS), and threonine 204. The active-site Proton donor is aspartate 257. Positions 265 and 289 each coordinate AMP.

This sequence belongs to the thymidine/pyrimidine-nucleoside phosphorylase family. Type 2 subfamily.

It carries out the reaction AMP + phosphate = alpha-D-ribose 1,5-bisphosphate + adenine. The enzyme catalyses CMP + phosphate = cytosine + alpha-D-ribose 1,5-bisphosphate. It catalyses the reaction UMP + phosphate = alpha-D-ribose 1,5-bisphosphate + uracil. Catalyzes the conversion of AMP and phosphate to adenine and ribose 1,5-bisphosphate (R15P). Exhibits phosphorylase activity toward CMP and UMP in addition to AMP. Functions in an archaeal AMP degradation pathway, together with R15P isomerase and RubisCO. The polypeptide is AMP phosphorylase (Hyperthermus butylicus (strain DSM 5456 / JCM 9403 / PLM1-5)).